Reading from the N-terminus, the 130-residue chain is Small ribosomal subunit protein uS9 (130 aa).

Residues 109 to 130 (RAKERKKYGLYGARRSPQFTKR) are disordered.

This sequence belongs to the universal ribosomal protein uS9 family.

This Malacoplasma penetrans (strain HF-2) (Mycoplasma penetrans) protein is Small ribosomal subunit protein uS9.